We begin with the raw amino-acid sequence, 90 residues long: UPF0298 protein SSU98_1559 (90 aa).

The protein belongs to the UPF0298 family.

The protein localises to the cytoplasm. The sequence is that of UPF0298 protein SSU98_1559 from Streptococcus suis (strain 98HAH33).